A 320-amino-acid chain; its full sequence is Methenyltetrahydromethanopterin cyclohydrolase (320 aa).

This sequence belongs to the MCH family.

The protein resides in the cytoplasm. The enzyme catalyses 5,10-methenyl-5,6,7,8-tetrahydromethanopterin + H2O = N(5)-formyl-5,6,7,8-tetrahydromethanopterin + H(+). It participates in one-carbon metabolism; methanogenesis from CO(2); 5,10-methenyl-5,6,7,8-tetrahydromethanopterin from CO(2): step 3/3. Functionally, catalyzes the reversible interconversion of 5-formyl-H(4)MPT to methenyl-H(4)MPT(+). In Methanothermobacter thermautotrophicus (strain ATCC 29096 / DSM 1053 / JCM 10044 / NBRC 100330 / Delta H) (Methanobacterium thermoautotrophicum), this protein is Methenyltetrahydromethanopterin cyclohydrolase (mch).